The primary structure comprises 313 residues: Small ribosomal subunit protein uS2 (313 aa).

The span at 234-243 (DEEAKEEKTK) shows a compositional bias: basic and acidic residues. Positions 234 to 313 (DEEAKEEKTK…ASKAEAEEGK (80 aa)) are disordered. Residues 244–256 (AKTTAKKVVTKKA) are compositionally biased toward basic residues. Basic and acidic residues predominate over residues 266–297 (AEKKSEKPTTEKRPTKEAAETKETSEEPKTKE).

It belongs to the universal ribosomal protein uS2 family.

The protein is Small ribosomal subunit protein uS2 of Coxiella burnetii (strain Dugway 5J108-111).